Reading from the N-terminus, the 371-residue chain is Trans-enoyl reductase calK (371 aa).

Residue 51 to 54 participates in NADP(+) binding; it reads NDHK. 145-152 is a binding site for substrate; that stretch reads WSTISLAF. NADP(+) contacts are provided by residues 181 to 184, 204 to 207, Y222, and 269 to 270; these read GTAS, SNQS, and LE. 289-293 is a binding site for substrate; it reads GFQVL. NADP(+) is bound at residue 359–360; it reads VR.

Belongs to the zinc-containing alcohol dehydrogenase family. As to quaternary structure, monomer.

It functions in the pathway secondary metabolite biosynthesis. Its function is as follows. Trans-enoyl reductase; part of the gene cluster that mediates the biosynthesis of calbistrin A and related compounds. Calbistrin A is a secondary metabolite with an interesting structure that was recently found to have bioactivity against leukemia cells. It consists of two polyketides linked by an ester bond: a bicyclic decalin containing polyketide and a linear 12 carbon dioic acid structure. The polyketide synthase calA is probably responsible for forming the decalin moiety. Because calA lacks a designated enoylreductase (ER) domain, the required activity is provided by the trans-enoyl reductase calK. Following release from the PKS, calF then probably catalyzes the oxidation and the subsequent Diels Alder cycloisomerization that lead to the formation of the decalin moiety. The decalin polyketide backbone includes two C-methyl groups, at C7 and C11 in backbone, of which the C7 position is probably methylated by the methyltransferase domain of calA. A candidate for adding the methyl group at C11, if not done by CalA, is the cluster methyltransferase calH. Several additional tailoring enzymes within the cluster could be involved in the modification of the decalin polyketide product. Those include the 3 cytochrome P450 monooxygenases CalE, CalG and CalL, of which one might be responsible for the introduction of the extra hydroxyl group attached to the backbone of the decalin moiety, at position C9 in the backbone, that allows for attachment of the linear moiety. One tailoring enzyme activity that is expected to be involved in biosynthesis of calbistrin is an acyltransferase for connecting the two polyketide synthase products, and which could be performed by the cluster acyltransferase calJ. The enzyme responsible for the biosynthesis of the linear moiety, probably a second PKS, has not been identified yet. The polypeptide is Trans-enoyl reductase calK (Penicillium decumbens).